Consider the following 136-residue polypeptide: Small ribosomal subunit protein uS19 (136 aa).

This sequence belongs to the universal ribosomal protein uS19 family.

Its function is as follows. Protein S19 forms a complex with S13 that binds strongly to the 16S ribosomal RNA. In Methanothermobacter thermautotrophicus (strain ATCC 29096 / DSM 1053 / JCM 10044 / NBRC 100330 / Delta H) (Methanobacterium thermoautotrophicum), this protein is Small ribosomal subunit protein uS19 (rps19).